Consider the following 540-residue polypeptide: 2-isopropylmalate synthase (540 aa).

A Pyruvate carboxyltransferase domain is found at 8 to 269; the sequence is VLIFDTTLRD…YFNPFFGRAE (262 aa). Mn(2+) is bound by residues Asp-17, His-208, His-210, and Asn-244. The interval 408–540 is regulatory domain; the sequence is QLKLVQVSCG…ATPLDASPTL (133 aa).

The protein belongs to the alpha-IPM synthase/homocitrate synthase family. LeuA type 1 subfamily. As to quaternary structure, homodimer. Mn(2+) is required as a cofactor.

The protein localises to the cytoplasm. The enzyme catalyses 3-methyl-2-oxobutanoate + acetyl-CoA + H2O = (2S)-2-isopropylmalate + CoA + H(+). It participates in amino-acid biosynthesis; L-leucine biosynthesis; L-leucine from 3-methyl-2-oxobutanoate: step 1/4. Catalyzes the condensation of the acetyl group of acetyl-CoA with 3-methyl-2-oxobutanoate (2-ketoisovalerate) to form 3-carboxy-3-hydroxy-4-methylpentanoate (2-isopropylmalate). This chain is 2-isopropylmalate synthase, found in Synechococcus sp. (strain WH7803).